Consider the following 122-residue polypeptide: Acidic phospholipase A2 BpirPLA2-I (122 aa).

7 disulfide bridges follow: Cys-26–Cys-115, Cys-28–Cys-44, Cys-43–Cys-95, Cys-49–Cys-122, Cys-50–Cys-88, Cys-57–Cys-81, and Cys-75–Cys-86. 3 residues coordinate Ca(2+): Tyr-27, Gly-29, and Gly-31. Residue His-47 is part of the active site. A Ca(2+)-binding site is contributed by Asp-48. The active site involves Asp-89. Residues 105–117 carry the Antiplatelet activity motif; sequence IKYWFYGAKNCQE.

This sequence belongs to the phospholipase A2 family. Group II subfamily. D49 sub-subfamily. Requires Ca(2+) as cofactor. Expressed by the venom gland.

It is found in the secreted. It carries out the reaction a 1,2-diacyl-sn-glycero-3-phosphocholine + H2O = a 1-acyl-sn-glycero-3-phosphocholine + a fatty acid + H(+). Its activity is regulated as follows. Inhibited by EDTA and p-bromophenacyl bromide (BPB). In terms of biological role, snake venom phospholipase A2 (PLA2) that inhibits collagen/ADP-induced platelet aggregation, and induces hypotension in rats (activity abolished in the presence of p-bromophenacyl bromide). PLA2 catalyzes the calcium-dependent hydrolysis of the 2-acyl groups in 3-sn-phosphoglycerides. The polypeptide is Acidic phospholipase A2 BpirPLA2-I (Bothrops pirajai (Piraja's lancehead)).